The chain runs to 397 residues: Efflux pump periplasmic linker BepD (397 aa).

A signal peptide spans 1–26; sequence MTLNRTIRCFAAGAAFIVFAAQPALA. Residues 98–139 adopt a coiled-coil conformation; it reads APYQAELEKAQAQVAQAEAQYQQSIRDAERAEQLVQQKVQSA.

This sequence belongs to the membrane fusion protein (MFP) (TC 8.A.1) family. Probably part of a tripartite efflux pump, which is composed of an outer membrane efflux protein, an inner membrane protein and a protein that expands the periplasmic space. Could form a tripartite pump with BepC and BepE.

Its subcellular location is the periplasm. Functionally, involved in resistance to several unrelated toxic compounds, such as dyes, detergents and antibiotics. The protein is Efflux pump periplasmic linker BepD (bepD) of Brucella suis biovar 1 (strain 1330).